A 62-amino-acid chain; its full sequence is Frontoxin III (62 aa).

4 disulfides stabilise this stretch: C3–C24, C17–C41, C43–C54, and C55–C60.

As to expression, expressed by the venom gland.

It localises to the secreted. In terms of biological role, binds to muscle nicotinic acetylcholine receptor (nAChR) and inhibit acetylcholine from binding to the receptor, thereby impairing neuromuscular transmission. In Micrurus frontalis (Coral snake), this protein is Frontoxin III.